Reading from the N-terminus, the 726-residue chain is A-type inclusion protein A25 homolog (726 aa).

A disordered region spans residues 342–361 (TNTGIEEPHATGGDKEDQPI). The segment covering 347 to 360 (EEPHATGGDKEDQP) has biased composition (basic and acidic residues). Residues 426 to 713 (TELEEAKRKL…ERQLNDCRRN (288 aa)) form a 4 X approximate tandem repeats region. 4 consecutive repeat copies span residues 612-634 (RELE…CTRN), 639-661 (QEVD…CIES), 667-689 (TEIS…CRGN), and 691-713 (TEIS…CRRN).

This sequence belongs to the poxviridae A25 protein family. As to quaternary structure, interacts (via N-terminus) with protein A26.

It is found in the virion. Structural protein that forms a matrix surrounding the mature virion (MV) through interaction with protein A26. Presence of protein A25 in the virion structurally prevents direct virus-cell fusion mechanism. This is A-type inclusion protein A25 homolog from Camelus.